A 119-amino-acid chain; its full sequence is Holo-[acyl-carrier-protein] synthase (119 aa).

The Mg(2+) site is built by Asp8 and Glu58.

This sequence belongs to the P-Pant transferase superfamily. AcpS family. It depends on Mg(2+) as a cofactor.

Its subcellular location is the cytoplasm. It catalyses the reaction apo-[ACP] + CoA = holo-[ACP] + adenosine 3',5'-bisphosphate + H(+). In terms of biological role, transfers the 4'-phosphopantetheine moiety from coenzyme A to a Ser of acyl-carrier-protein. This is Holo-[acyl-carrier-protein] synthase from Bacillus mycoides (strain KBAB4) (Bacillus weihenstephanensis).